The primary structure comprises 82 residues: Ranatensin (82 aa).

The first 27 residues, Met1 to Ser27, serve as a signal peptide directing secretion. Residues Val28–Arg47 constitute a propeptide that is removed on maturation. Met58 is subject to Methionine amide. Residues Ser62–Ser82 constitute a propeptide that is removed on maturation.

It belongs to the bombesin/neuromedin-B/ranatensin family. Expressed by the skin glands.

It is found in the secreted. The sequence is that of Ranatensin from Lithobates pipiens (Northern leopard frog).